Reading from the N-terminus, the 99-residue chain is Large ribosomal subunit protein bL21 (99 aa).

Belongs to the bacterial ribosomal protein bL21 family. Part of the 50S ribosomal subunit. Contacts protein L20.

In terms of biological role, this protein binds to 23S rRNA in the presence of protein L20. This Deinococcus geothermalis (strain DSM 11300 / CIP 105573 / AG-3a) protein is Large ribosomal subunit protein bL21.